The sequence spans 130 residues: Hypocretin neuropeptide precursor (130 aa).

The first 32 residues, 1–32 (MNFPSTKVPWAAVTLLLLLLLPPALLSLGVDA), serve as a signal peptide directing secretion. A Pyrrolidone carboxylic acid modification is found at Gln33. 2 cysteine pairs are disulfide-bonded: Cys38-Cys44 and Cys39-Cys46. Position 65 is a leucine amide (Leu65). Met96 carries the methionine amide modification. A propeptide spanning residues 97-130 (GRRAGAELEPHPCSGRGCPTVTTTALAPRGGSGV) is cleaved from the precursor.

This sequence belongs to the orexin family. Post-translationally, specific enzymatic cleavages at paired basic residues yield the different active peptides. As to expression, restricted to neuronal cell bodies of the dorsal and lateral hypothalamus.

It is found in the rough endoplasmic reticulum. The protein localises to the cytoplasmic vesicle. Its subcellular location is the synapse. In terms of biological role, neuropeptides that play a significant role in the regulation of food intake and sleep-wakefulness, possibly by coordinating the complex behavioral and physiologic responses of these complementary homeostatic functions. A broader role in the homeostatic regulation of energy metabolism, autonomic function, hormonal balance and the regulation of body fluids, is also suggested. Its function is as follows. Binds to orexin receptors HCRTR1/OX1R and HCRTR2/OX2R with a high affinity. Stimulates food intake. Modulates pituitary luteinizing hormone secretion in an ovarian steroid-dependent manner. Binds to orexin receptor HCRTR2/OX2R only. Stimulates food intake. Modulates pituitary luteinizing hormone secretion in an ovarian steroid-dependent manner. This chain is Hypocretin neuropeptide precursor (Hcrt), found in Mus musculus (Mouse).